The primary structure comprises 43 residues: Truncated K3L homolog (43 aa).

Belongs to the orthopoxvirus OPG041 family.

The chain is Truncated K3L homolog (OPG041) from Cynomys gunnisoni (Gunnison's prairie dog).